The following is a 270-amino-acid chain: Monocyte to macrophage differentiation factor 2 (270 aa).

Residues 1 to 38 (MFAPRLLDFQKTKYARFMNHRVPAHKRYQPTEYEHAAN) lie on the Cytoplasmic side of the membrane. Residues 39–59 (CATHAFWIIPSILGSSNLYFL) form a helical membrane-spanning segment. At 60–65 (SDDDWE) the chain is on the lumenal side. The chain crosses the membrane as a helical span at residues 66–86 (TISAWIYGLGLCGLFVVSTVF). Over 87–102 (HTISWKKSHLRMVEHC) the chain is Cytoplasmic. Residues 103–123 (LHMFDRMVIYFFIAASYAPWL) form a helical membrane-spanning segment. Topologically, residues 124 to 132 (NLRELGPWA) are lumenal. The helical transmembrane segment at 133-153 (SHMRWLVWIMASVGTIYVFFF) threads the bilayer. Topologically, residues 154-182 (HERTGSCVQFLRGEACPKAGTACLPARYK) are cytoplasmic. The helical transmembrane segment at 183 to 203 (LVELLCYVVMGFFPALVILSM) threads the bilayer. The Lumenal segment spans residues 204-205 (PN). A helical membrane pass occupies residues 206–226 (TEGIWELVTGGVFYCLGMVFF). Over 227–233 (KSDGRIP) the chain is Cytoplasmic. Residues 234-254 (FAHAIWHLFVAFGAGTHYYAI) traverse the membrane as a helical segment. Residues 255–270 (WRYLYLPSTLQTKVSK) are Lumenal-facing.

It belongs to the ADIPOR family. Shows restricted expression with highest levels in brain and testis.

It is found in the golgi apparatus membrane. The polypeptide is Monocyte to macrophage differentiation factor 2 (Homo sapiens (Human)).